An 872-amino-acid chain; its full sequence is Dynein regulatory complex subunit 7 (872 aa).

Disordered regions lie at residues 1-40, 231-281, and 385-410; these read MEVL…REET, ESVK…QEEA, and EEED…KSFD. Residues 1–64 adopt a coiled-coil conformation; the sequence is MEVLKEKVEE…SEIEVSVPEK (64 aa). Basic and acidic residues-rich tracts occupy residues 16-40, 231-240, and 248-281; these read REEA…REET, ESVKEEEKAP, and PPRD…QEEA. A coiled-coil region spans residues 254 to 292; sequence SRFEQEQEMKRQEAIKAEEENRRKQEEARLLEQENAKTD. Residues 385 to 398 show a composition bias toward acidic residues; sequence EEEDEGMNDDDDVE. The span at 399-409 shows a compositional bias: basic and acidic residues; sequence NLGKEDEDKSF. Coiled coils occupy residues 676-706 and 780-805; these read LKNE…EEEE and QRLI…KKQQ.

This sequence belongs to the DRC7 family. In terms of assembly, component of the nexin-dynein regulatory complex (N-DRC). Interacts with TCTE1/DRC5. Interacts with DRC3 and GAS8/DRC4.

The protein localises to the cell projection. It localises to the cilium. The protein resides in the flagellum. Its subcellular location is the cytoplasm. It is found in the cytoskeleton. The protein localises to the cilium axoneme. It localises to the flagellum axoneme. In terms of biological role, component of the nexin-dynein regulatory complex (N-DRC) a key regulator of ciliary/flagellar motility which maintains the alignment and integrity of the distal axoneme and regulates microtubule sliding in motile axonemes. Involved in the regulation of flagellar motility. Essential for male fertility, sperm head morphogenesis and sperm flagellum formation. The polypeptide is Dynein regulatory complex subunit 7 (DRC7) (Bos taurus (Bovine)).